A 65-amino-acid chain; its full sequence is Metallothionein-3 (65 aa).

Methionine 1 bears the N-acetylmethionine mark. The interval 1–30 is beta; sequence MDPEACPCPTGGSCTCSDSCKCEGCTCASS. Residues cysteine 6, cysteine 8, cysteine 14, cysteine 16, cysteine 20, cysteine 22, cysteine 25, and cysteine 27 each contribute to the a divalent metal cation site. Residues 31–65 are alpha; it reads KKSCCPAECEKCAKDCVCKGGEGAEAEEKKCGCCQ. Serine 33 is subject to Phosphoserine. Residues cysteine 34, cysteine 35, cysteine 39, cysteine 42, cysteine 46, cysteine 48, cysteine 61, cysteine 63, and cysteine 64 each coordinate a divalent metal cation.

The protein belongs to the metallothionein superfamily. Type 1 family.

In terms of biological role, binds heavy metals. Contains five zinc and one copper atoms per polypeptide chain and only a negligible amount of cadmium. The polypeptide is Metallothionein-3 (MT3) (Ovis aries (Sheep)).